The chain runs to 806 residues: MASGADSKGDDLSTAILKQKNRPNRLIVDEAINEDNSVVSLSQPKMDELQLFRGDTVLLKGKKRREAVCIVLSDDTCSDEKIRMNRVVRNNLRVRLGDVISIQPCPDVKYGKRIHVLPIDDTVEGITGNLFEVYLKPYFLEAYRPIRKGDIFLVRGGMRAVEFKVVETDPSPYCIVAPDTVIHCEGEPIKREDEEESLNEVGYDDIGGCRKQLAQIKEMVELPLRHPALFKAIGVKPPRGILLYGPPGTGKTLIARAVANETGAFFFLINGPEIMSKLAGESESNLRKAFEEAEKNAPAIIFIDELDAIAPKREKTHGEVERRIVSQLLTLMDGLKQRAHVIVMAATNRPNSIDPALRRFGRFDREVDIGIPDATGRLEILQIHTKNMKLADDVDLEQVANETHGHVGADLAALCSEAALQAIRKKMDLIDLEDETIDAEVMNSLAVTMDDFRWALSQSNPSALRETVVEVPQVTWEDIGGLEDVKRELQELVQYPVEHPDKFLKFGMTPSKGVLFYGPPGCGKTLLAKAIANECQANFISIKGPELLTMWFGESEANVREIFDKARQAAPCVLFFDELDSIAKARGGNIGDGGGAADRVINQILTEMDGMSTKKNVFIIGATNRPDIIDPAILRPGRLDQLIYIPLPDEKSRVAILKANLRKSPVAKDVDLEFLAKMTNGFSGADLTEICQRACKLAIRESIESEIRRERERQTNPSAMEVEEDDPVPEIRRDHFEEAMRFARRSVSDNDIRKYEMFAQTLQQSRGFGSFRFPSGNQGGAGPSQGSGGGTGGSVYTEDNDDDLYG.

The residue at position 2 (A2) is an N-acetylalanine. Phosphoserine is present on residues S3 and S7. Residue K8 forms a Glycyl lysine isopeptide (Lys-Gly) (interchain with G-Cter in SUMO2) linkage. The residue at position 13 (S13) is a Phosphoserine. K18 participates in a covalent cross-link: Glycyl lysine isopeptide (Lys-Gly) (interchain with G-Cter in SUMO2). S37 carries the post-translational modification Phosphoserine. Residue 247–253 participates in ATP binding; sequence PGTGKTL. K315 bears the N6,N6,N6-trimethyllysine; by VCPKMT mark. Residues N348 and H384 each coordinate ATP. T436 carries the phosphothreonine modification. S462 is modified (phosphoserine). N6-acetyllysine occurs at positions 502 and 505. 521 to 526 contacts ATP; it reads GCGKTL. An N6-acetyllysine; alternate modification is found at K668. N6-succinyllysine; alternate is present on K668. S702 is subject to Phosphoserine. Residues 708 to 727 are disordered; that stretch reads RRERERQTNPSAMEVEEDDP. K754 carries the N6-acetyllysine modification. The disordered stretch occupies residues 768 to 806; sequence FGSFRFPSGNQGGAGPSQGSGGGTGGSVYTEDNDDDLYG. A phosphoserine mark is found at S770, S775, and S787. Over residues 777–793 the composition is skewed to gly residues; it reads NQGGAGPSQGSGGGTGG. The segment at 797 to 806 is interaction with UBXN6; the sequence is TEDNDDDLYG. Positions 802-806 match the PIM motif motif; the sequence is DDLYG. Position 805 is a phosphotyrosine (Y805).

It belongs to the AAA ATPase family. As to quaternary structure, homohexamer. Forms a ring-shaped particle of 12.5 nm diameter, that displays 6-fold radial symmetry. Part of a ternary complex containing STX5A, NSFL1C and VCP. NSFL1C forms a homotrimer that binds to one end of a VCP homohexamer. The complex binds to membranes enriched in phosphatidylethanolamine-containing lipids and promotes Golgi membrane fusion. Binds to a heterodimer of NPLOC4 and UFD1, binding to this heterodimer inhibits Golgi-membrane fusion. Interaction with VCIP135 leads to dissociation of the complex via ATP hydrolysis by VCP. Part of a ternary complex containing NPLOC4, UFD1 and VCP. Interacts with NSFL1C-like protein p37; the complex has membrane fusion activity and is required for Golgi and endoplasmic reticulum biogenesis. Interacts with SELENOS and SYVN1, as well as with DERL1 (via SHP-box motif), DERL2 and DERL3; which probably transfer misfolded proteins from the ER to VCP. Interacts with SVIP and forms a complex with SVIP and DERL1. Component of a complex required to couple retrotranslocation, ubiquitination and deglycosylation composed of NGLY1, SAKS1, AMFR, VCP and RAD23B. Part of a complex composed of STUB1/CHIP, VCP/p97, CHRNA3, and UBXN2A that modulates the ubiquitination and endoplasmic reticulum-associated degradation (ERAD) of CHRNA3. Within the complex UBXN2A acts as a scaffold protein required for the interaction of CHRNA3 with VCP/p97, this interaction also inhibits CHRNA3 ubiquitination by STUB1/CHIP and subsequently ERAD. Interacts with UBXN2A (via UBX domain); the interaction is required for the interaction of CHRNA3 in the STUB1-VCP-UBXN2A complex. Directly interacts with UBXN4 and RNF19A. Interacts with CASR. Interacts with UBE4B and YOD1. Interacts with clathrin. Interacts with RNF103. Interacts with TRIM13 and TRIM21. Component of a VCP/p97-AMFR/gp78 complex that participates in the final step of the endoplasmic reticulum-associated degradation (ERAD) of HMGCR. Interacts directly with AMFR/gp78 (via its VIM). Interacts with RHBDD1 (via C-terminal domain). Interacts with SPRTN; leading to recruitment to stalled replication forks. Interacts with WASHC5. Interacts with UBOX5. Interacts (via N-terminus) with UBXN7, UBXN8, and probably several other UBX domain-containing proteins (via UBX domains); the interactions are mutually exclusive with VIM-dependent interactions such as those with AMFR and SELENOS. Forms a complex with UBQLN1 and UBXN4. Interacts (via the PIM motif) with RNF31 (via the PUB domain). Interacts with RIGI and RNF125; interaction takes place when RIGI is ubiquitinated via 'Lys-63'-linked ubiquitin on its CARD domains, leading to recruit RNF125 and promote ubiquitination and degradation of RIGI. Interacts with BAG6. Interacts with UBXN10. Interacts with UBXN6; the interaction with UBXN6 is direct and competitive with UFD1. Forms a ternary complex with CAV1 and UBXN6. Interacts with PLAA, UBXN6 and YOD1; may form a complex involved in macroautophagy. Interacts with ANKZF1. Interacts with ubiquitin-binding protein FAF1. Interacts with ZFAND2B (via VIM motif); the interaction is direct. Interacts with ZFAND1 (via its ubiquitin-like region); this interaction occurs in an arsenite-dependent manner. Interacts with CCDC47. Interacts with UBAC2. Interacts with LMBR1L. Interacts with ATXN3. Interacts with TEX264; bridging VCP to covalent DNA-protein cross-links (DPCs). Interacts with FBXL4. Phosphorylated by tyrosine kinases in response to T-cell antigen receptor activation. Phosphorylated in mitotic cells. In terms of processing, ISGylated. Post-translationally, methylation at Lys-315 catalyzed by VCPKMT is increased in the presence of ASPSCR1. Lys-315 methylation may decrease ATPase activity.

Its subcellular location is the cytoplasm. It is found in the cytosol. The protein resides in the endoplasmic reticulum. It localises to the nucleus. The protein localises to the stress granule. The enzyme catalyses ATP + H2O = ADP + phosphate + H(+). Necessary for the fragmentation of Golgi stacks during mitosis and for their reassembly after mitosis. Involved in the formation of the transitional endoplasmic reticulum (tER). The transfer of membranes from the endoplasmic reticulum to the Golgi apparatus occurs via 50-70 nm transition vesicles which derive from part-rough, part-smooth transitional elements of the endoplasmic reticulum (tER). Vesicle budding from the tER is an ATP-dependent process. The ternary complex containing UFD1, VCP and NPLOC4 binds ubiquitinated proteins and is necessary for the export of misfolded proteins from the ER to the cytoplasm, where they are degraded by the proteasome. The NPLOC4-UFD1-VCP complex regulates spindle disassembly at the end of mitosis and is necessary for the formation of a closed nuclear envelope. Regulates E3 ubiquitin-protein ligase activity of RNF19A. Component of the VCP/p97-AMFR/gp78 complex that participates in the final step of the sterol-mediated ubiquitination and endoplasmic reticulum-associated degradation (ERAD) of HMGCR. Mediates the endoplasmic reticulum-associated degradation of CHRNA3 in cortical neurons as part of the STUB1-VCP-UBXN2A complex. Involved in endoplasmic reticulum stress-induced pre-emptive quality control, a mechanism that selectively attenuates the translocation of newly synthesized proteins into the endoplasmic reticulum and reroutes them to the cytosol for proteasomal degradation. Involved in clearance process by mediating G3BP1 extraction from stress granules. Also involved in DNA damage response: recruited to double-strand breaks (DSBs) sites in a RNF8- and RNF168-dependent manner and promotes the recruitment of TP53BP1 at DNA damage sites. Recruited to stalled replication forks by SPRTN: may act by mediating extraction of DNA polymerase eta (POLH) to prevent excessive translesion DNA synthesis and limit the incidence of mutations induced by DNA damage. Together with SPRTN metalloprotease, involved in the repair of covalent DNA-protein cross-links (DPCs) during DNA synthesis. Involved in interstrand cross-link repair in response to replication stress by mediating unloading of the ubiquitinated CMG helicase complex. Mediates extraction of PARP1 trapped to chromatin: recognizes and binds ubiquitinated PARP1 and promotes its removal. Required for cytoplasmic retrotranslocation of stressed/damaged mitochondrial outer-membrane proteins and their subsequent proteasomal degradation. Essential for the maturation of ubiquitin-containing autophagosomes and the clearance of ubiquitinated protein by autophagy. Acts as a negative regulator of type I interferon production by interacting with RIGI: interaction takes place when RIGI is ubiquitinated via 'Lys-63'-linked ubiquitin on its CARD domains, leading to recruit RNF125 and promote ubiquitination and degradation of RIGI. May play a role in the ubiquitin-dependent sorting of membrane proteins to lysosomes where they undergo degradation. May more particularly play a role in caveolins sorting in cells. By controlling the steady-state expression of the IGF1R receptor, indirectly regulates the insulin-like growth factor receptor signaling pathway. This Homo sapiens (Human) protein is Transitional endoplasmic reticulum ATPase (VCP).